Consider the following 426-residue polypeptide: Gamma-glutamyl phosphate reductase (426 aa).

This sequence belongs to the gamma-glutamyl phosphate reductase family.

Its subcellular location is the cytoplasm. The catalysed reaction is L-glutamate 5-semialdehyde + phosphate + NADP(+) = L-glutamyl 5-phosphate + NADPH + H(+). The protein operates within amino-acid biosynthesis; L-proline biosynthesis; L-glutamate 5-semialdehyde from L-glutamate: step 2/2. Catalyzes the NADPH-dependent reduction of L-glutamate 5-phosphate into L-glutamate 5-semialdehyde and phosphate. The product spontaneously undergoes cyclization to form 1-pyrroline-5-carboxylate. The protein is Gamma-glutamyl phosphate reductase of Paracidovorax citrulli (strain AAC00-1) (Acidovorax citrulli).